Here is a 258-residue protein sequence, read N- to C-terminus: Imidazole glycerol phosphate synthase subunit HisF (258 aa).

Residues D11 and D130 contribute to the active site.

The protein belongs to the HisA/HisF family. Heterodimer of HisH and HisF.

Its subcellular location is the cytoplasm. The catalysed reaction is 5-[(5-phospho-1-deoxy-D-ribulos-1-ylimino)methylamino]-1-(5-phospho-beta-D-ribosyl)imidazole-4-carboxamide + L-glutamine = D-erythro-1-(imidazol-4-yl)glycerol 3-phosphate + 5-amino-1-(5-phospho-beta-D-ribosyl)imidazole-4-carboxamide + L-glutamate + H(+). It participates in amino-acid biosynthesis; L-histidine biosynthesis; L-histidine from 5-phospho-alpha-D-ribose 1-diphosphate: step 5/9. IGPS catalyzes the conversion of PRFAR and glutamine to IGP, AICAR and glutamate. The HisF subunit catalyzes the cyclization activity that produces IGP and AICAR from PRFAR using the ammonia provided by the HisH subunit. This is Imidazole glycerol phosphate synthase subunit HisF from Citrobacter koseri (strain ATCC BAA-895 / CDC 4225-83 / SGSC4696).